The primary structure comprises 327 residues: ATP-dependent (S)-NAD(P)H-hydrate dehydratase (327 aa).

In terms of domain architecture, YjeF C-terminal spans L11–L313. (6S)-NADPHX is bound by residues G121 and N174 to R180. ATP-binding positions include K209–D213 and G228–G237. D238 provides a ligand contact to (6S)-NADPHX.

It belongs to the NnrD/CARKD family. Mg(2+) serves as cofactor.

Its subcellular location is the cytoplasm. It catalyses the reaction (6S)-NADHX + ATP = ADP + phosphate + NADH + H(+). The enzyme catalyses (6S)-NADPHX + ATP = ADP + phosphate + NADPH + H(+). Its function is as follows. Catalyzes the dehydration of the S-form of NAD(P)HX at the expense of ATP, which is converted to ADP. Together with NAD(P)HX epimerase, which catalyzes the epimerization of the S- and R-forms, the enzyme allows the repair of both epimers of NAD(P)HX, a damaged form of NAD(P)H that is a result of enzymatic or heat-dependent hydration. This chain is ATP-dependent (S)-NAD(P)H-hydrate dehydratase, found in Schizosaccharomyces pombe (strain 972 / ATCC 24843) (Fission yeast).